The sequence spans 243 residues: Complement C1q tumor necrosis factor-related protein 5 (243 aa).

The first 15 residues, 1-15 (MRPLLVLLLLGLAAG), serve as a signal peptide directing secretion. The tract at residues 15-125 (GSPPLDDNKI…PPPSDAPLPF (111 aa)) is disordered. The Collagen-like domain occupies 30–95 (GHPGLPGTPG…AGPAGPTGPA (66 aa)). The segment covering 83 to 96 (RGEAGPAGPTGPAG) has biased composition (low complexity). The C1q domain occupies 99 to 238 (SVPPRSAFSA…GFLVYSDWHS (140 aa)).

As to quaternary structure, may interact with ERFE. Homotrimer (via collagen-like domain). May form higher order oligomers by supercoiling of the trimers.

Its subcellular location is the secreted. This chain is Complement C1q tumor necrosis factor-related protein 5 (C1QTNF5), found in Homo sapiens (Human).